A 288-amino-acid polypeptide reads, in one-letter code: Executioner caspase (288 aa).

Residue cysteine 131 is part of the active site.

It belongs to the peptidase C14A family.

May induce host cell apoptosis and contribute of the establishment of a special cell cleavage process in which apoppotic bodies are rescued by the virus and differentiate to form large vesicles in which virion assembles. The chain is Executioner caspase from Spodoptera frugiperda ascovirus 1a (SfAV-1a).